Consider the following 325-residue polypeptide: Replication factor C small subunit (325 aa).

Gly54 to Thr61 is an ATP binding site.

It belongs to the activator 1 small subunits family. RfcS subfamily. As to quaternary structure, heteromultimer composed of small subunits (RfcS) and large subunits (RfcL).

Part of the RFC clamp loader complex which loads the PCNA sliding clamp onto DNA. The sequence is that of Replication factor C small subunit from Haloarcula marismortui (strain ATCC 43049 / DSM 3752 / JCM 8966 / VKM B-1809) (Halobacterium marismortui).